The primary structure comprises 272 residues: Neurogenin-2 (272 aa).

A disordered region spans residues Leu-30–Ala-69. In terms of domain architecture, bHLH spans Thr-112 to Leu-164. A compositionally biased stretch (low complexity) spans Ala-197–Ser-239. The tract at residues Ala-197 to His-264 is disordered.

Efficient DNA binding requires dimerization with another bHLH protein.

It localises to the nucleus. Its function is as follows. Transcriptional regulator. Involved in neuronal differentiation. Activates transcription by binding to the E box (5'-CANNTG-3'). This Homo sapiens (Human) protein is Neurogenin-2 (NEUROG2).